A 540-amino-acid polypeptide reads, in one-letter code: FAD-binding monooxygenase lolF1 (540 aa).

Residues 43–46 and 55–58 each bind FAD; these read VWRE and DSLF. Residues 53 to 55, 182 to 188, and 205 to 206 contribute to the NADP(+) site; these read AVD, TGPSGVQ, and QS.

The protein belongs to the FAD-binding monooxygenase family. The cofactor is FAD.

The protein operates within alkaloid biosynthesis. In terms of biological role, FAD-binding monooxygenase; part of the gene cluster that mediates the biosynthesis of loline alkaloids, potent insecticidal agents composed of a pyrrolizidine ring system and an uncommon ether bridge linking carbons 2 and 7. Lolines are structurally differentiated by the various modifications of the L-amino group and include norloline, loline, N-methylloline, N-acetylloline, N-acetylnorloline, and N-formylloline. The first committed step is the condensation of O-acetyl-L-homoserine (derived from L-aspartic acid) and L-proline, probably catalyzed by the gamma-type pyridoxal 5'-phosphate(PLP)-dependent enzyme lolC, to give the diamino diacid, NACPP. Ensuing cyclization, decarboxylation, and acetylation steps yield 1-exo-acetamidopyrrolizidine (AcAP). LolO is required for installation of the ether bridge upon the pathway intermediate, 1-exo-acetamidopyrrolizidine (AcAP). In sequential 2-oxoglutarate- and O(2)-consuming steps, lolO removes hydrogens from C2 and C7 of AcAP to form both carbon-oxygen bonds in N-acetylnorloline (NANL), the precursor to all other lolines. The enzymes lolD, lolE, lolF and lolT have also been proposed to be involved in the ether-bridge installation. Further processing of the exocyclic moiety of NANL by fungal N-acetamidase (LolN), methyltransferase (LolM), and cytochrome P450 (LolP) enzymes, with occasional involvement of a plant acetyltransferase, generates the other known lolines. LolN transforms NANL to norlonine which is monomethylated and dimethylated to respectively lonine and N-methyllonine (NML) by lolM. LolP catalyzes hydroxylation of the methyl group in N-methylloline (NML) and further oxygenation to N-formylloline (NFL). A plant acetyltransferase is responsible for the acetylation of loline to form N-acetylloline (NAL). LolA might interact with aspartate kinase to prevent feedback inhibition of its activity by these end products and thereby promote production of L-homoserine from L-aspartate. This chain is FAD-binding monooxygenase lolF1, found in Epichloe uncinata (Endophyte fungus).